Consider the following 345-residue polypeptide: Ferredoxin--NADP reductase (345 aa).

The FAD site is built by Asp38, Gln46, Tyr51, Val91, Phe129, Asp295, and Thr336.

Belongs to the ferredoxin--NADP reductase type 2 family. As to quaternary structure, homodimer. Requires FAD as cofactor.

It catalyses the reaction 2 reduced [2Fe-2S]-[ferredoxin] + NADP(+) + H(+) = 2 oxidized [2Fe-2S]-[ferredoxin] + NADPH. This is Ferredoxin--NADP reductase from Rhodospirillum rubrum (strain ATCC 11170 / ATH 1.1.1 / DSM 467 / LMG 4362 / NCIMB 8255 / S1).